The primary structure comprises 887 residues: Alanine--tRNA ligase (887 aa).

Residues histidine 564, histidine 568, cysteine 676, and histidine 680 each coordinate Zn(2+).

This sequence belongs to the class-II aminoacyl-tRNA synthetase family. Requires Zn(2+) as cofactor.

Its subcellular location is the cytoplasm. It carries out the reaction tRNA(Ala) + L-alanine + ATP = L-alanyl-tRNA(Ala) + AMP + diphosphate. Its function is as follows. Catalyzes the attachment of alanine to tRNA(Ala) in a two-step reaction: alanine is first activated by ATP to form Ala-AMP and then transferred to the acceptor end of tRNA(Ala). Also edits incorrectly charged Ser-tRNA(Ala) and Gly-tRNA(Ala) via its editing domain. This is Alanine--tRNA ligase from Rhizobium meliloti (strain 1021) (Ensifer meliloti).